A 137-amino-acid chain; its full sequence is Phospholipase A2 group V (137 aa).

Residues 1–20 (MKGLLTLAWFLACSVPAVPG) form the signal peptide. Cystine bridges form between cysteine 46/cysteine 137, cysteine 48/cysteine 64, cysteine 63/cysteine 117, cysteine 70/cysteine 110, cysteine 79/cysteine 103, and cysteine 97/cysteine 108. 3 residues coordinate Ca(2+): tyrosine 47, glycine 49, and glycine 51. Residue histidine 67 is part of the active site. Aspartate 68 serves as a coordination point for Ca(2+). The active site involves aspartate 111.

Belongs to the phospholipase A2 family. Ca(2+) is required as a cofactor. This enzyme lacks one of the seven disulfide bonds found in similar PA2 proteins. Expressed in peritoneal macrophages (at protein level). Expressed in heart, skeletal muscle and white adipose tissue.

Its subcellular location is the secreted. It localises to the cell membrane. The protein localises to the cytoplasmic vesicle. It is found in the phagosome. The protein resides in the recycling endosome. Its subcellular location is the golgi apparatus. It localises to the cis-Golgi network. The protein localises to the trans-Golgi network. The enzyme catalyses a 1,2-diacyl-sn-glycero-3-phosphocholine + H2O = a 1-acyl-sn-glycero-3-phosphocholine + a fatty acid + H(+). It carries out the reaction 1-hexadecanoyl-2-(9Z-octadecenoyl)-sn-glycero-3-phosphocholine + H2O = 1-hexadecanoyl-sn-glycero-3-phosphocholine + (9Z)-octadecenoate + H(+). The catalysed reaction is 1-hexadecanoyl-2-(5Z,8Z,11Z,14Z-eicosatetraenoyl)-sn-glycero-3-phosphocholine + H2O = 1-hexadecanoyl-sn-glycero-3-phosphocholine + (5Z,8Z,11Z,14Z)-eicosatetraenoate + H(+). It catalyses the reaction 1-hexadecanoyl-2-(9Z,12Z-octadecadienoyl)-sn-glycero-3-phosphoethanolamine + H2O = 1-hexadecanoyl-sn-glycero-3-phosphoethanolamine + (9Z,12Z)-octadecadienoate + H(+). The enzyme catalyses 1-hexadecanoyl-2-(5Z,8Z,11Z,14Z-eicosatetraenoyl)-sn-glycero-3-phosphoethanolamine + H2O = 1-hexadecanoyl-sn-glycero-3-phosphoethanolamine + (5Z,8Z,11Z,14Z)-eicosatetraenoate + H(+). It carries out the reaction 1-octadecanoyl-2-(5Z,8Z,11Z,14Z-eicosatetraenoyl)-sn-glycero-3-phospho-(1D-myo-inositol) + H2O = 1-octadecanoyl-sn-glycero-3-phospho-(1D-myo-inositol) + (5Z,8Z,11Z,14Z)-eicosatetraenoate + H(+). The catalysed reaction is 1-hexadecanoyl-2-(9Z-octadecenoyl)-sn-glycero-3-phosphoglycerol + H2O = 1-hexadecanoyl-sn-glycero-3-phosphoglycerol + (9Z)-octadecenoate + H(+). It catalyses the reaction N-hexadecanoyl-1,2-di-(9Z-octadecenoyl)-sn-glycero-3-phosphoethanolamine + H2O = N-hexadecanoyl-1-(9Z-octadecenoyl)-sn-glycero-3-phosphoethanolamine + (9Z)-octadecenoate + H(+). The enzyme catalyses 1'-[1,2-di-(9Z-octadecenoyl)-sn-glycero-3-phospho]-3'-[1-(9Z-octadecenoyl)-sn-glycero-3-phospho]-glycerol + H2O = 1',3'-bis-[1-(9Z-octadecenoyl)-sn-glycero-3-phospho]-glycerol + (9Z)-octadecenoate + H(+). It carries out the reaction 1',3'-bis[1,2-di-(9Z-octadecenoyl)-sn-glycero-3-phospho]-glycerol + H2O = 1'-[1,2-di-(9Z-octadecenoyl)-sn-glycero-3-phospho]-3'-[1-(9Z-octadecenoyl)-sn-glycero-3-phospho]-glycerol + (9Z)-octadecenoate + H(+). Its pathway is lipid metabolism; phospholipid metabolism. The protein operates within lipid metabolism; leukotriene B4 biosynthesis. It participates in lipid metabolism; leukotriene C4 biosynthesis. Its function is as follows. Secretory calcium-dependent phospholipase A2 that primarily targets extracellular phospholipids. Hydrolyzes the ester bond of the fatty acyl group attached at sn-2 position of phospholipids (phospholipase A2 activity), preferentially releasing fatty acyl groups with a low degree of unsaturation such as oleoyl (C18:1) and linoleoyl (C18:2) groups. Hydrolyzes low-density lipoprotein (LDL) phospholipids releasing unsaturated fatty acids that drive macrophage polarization toward an M2 phenotype. May act in an autocrine and paracrine manner. Contributes to lipid remodeling of cellular membranes at different subcellular locations and generation of lipid mediators involved in pathogen clearance. Cleaves sn-2 fatty acyl chains of cardiolipin, a major component of the inner membrane of mitochondria and bacterial membranes. Promotes phagocytosis of bacteria in macrophages through production of lysophosphatidylethanolamines. Displays bactericidal activity against Gram-positive bacteria by directly hydrolyzing the phospholipids of the bacterial membrane. Promotes phagocytosis and killing of ingested fungi likely through controlling phagosome-lysosome fusion and phagosome maturation. Plays a role in biosynthesis of cysteinyl leukotrienes (CysLTs) in myeloid cells. In eosinophils, triggers perinuclear arachidonate release and LTC4 synthesis in a PLA2G4A-independent way. In neutrophils, amplifies CysLTs biosynthesis initiated by PLA2G4A. Promotes immune complex clearance in macrophages via stimulating synthesis of CysLTs, which act through CYSLTR1 to trigger phagocytosis. May regulate antigen processing in antigen-presenting cells. In pulmonary macrophages regulates IL33 production required for activation of group 2 innate lymphoid cells. May play a role in the biosynthesis of N-acyl ethanolamines that regulate energy metabolism. Hydrolyzes N-acyl phosphatidylethanolamines to N-acyl lysophosphatidylethanolamines, which are further cleaved by a lysophospholipase D to release N-acyl ethanolamines. This is Phospholipase A2 group V (Pla2g5) from Mus musculus (Mouse).